Consider the following 267-residue polypeptide: Glutamate 5-kinase (267 aa).

Lys-18 lines the ATP pocket. Ser-58, Asp-145, and Asn-157 together coordinate substrate. ATP is bound by residues 177–178 (SD) and 219–225 (TGGMATK).

It belongs to the glutamate 5-kinase family.

It is found in the cytoplasm. The enzyme catalyses L-glutamate + ATP = L-glutamyl 5-phosphate + ADP. It participates in amino-acid biosynthesis; L-proline biosynthesis; L-glutamate 5-semialdehyde from L-glutamate: step 1/2. In terms of biological role, catalyzes the transfer of a phosphate group to glutamate to form L-glutamate 5-phosphate. The polypeptide is Glutamate 5-kinase (Clostridium tetani (strain Massachusetts / E88)).